A 283-amino-acid polypeptide reads, in one-letter code: 2-dehydro-3-deoxyphosphooctonate aldolase (283 aa).

This sequence belongs to the KdsA family.

It localises to the cytoplasm. It carries out the reaction D-arabinose 5-phosphate + phosphoenolpyruvate + H2O = 3-deoxy-alpha-D-manno-2-octulosonate-8-phosphate + phosphate. The protein operates within carbohydrate biosynthesis; 3-deoxy-D-manno-octulosonate biosynthesis; 3-deoxy-D-manno-octulosonate from D-ribulose 5-phosphate: step 2/3. Its pathway is bacterial outer membrane biogenesis; lipopolysaccharide biosynthesis. The polypeptide is 2-dehydro-3-deoxyphosphooctonate aldolase (Vibrio cholerae serotype O1 (strain ATCC 39315 / El Tor Inaba N16961)).